A 23-amino-acid chain; its full sequence is Basic phospholipase A2 homolog Vur-S49 analog (23 aa).

The disordered stretch occupies residues 1 to 23; it reads SVLEIGLMLQEETEKNPKTSYSI.

In terms of processing, contains 7 disulfide bonds. As to expression, expressed by the venom gland.

It localises to the secreted. This is Basic phospholipase A2 homolog Vur-S49 analog from Vipera renardi (Steppe viper).